We begin with the raw amino-acid sequence, 306 residues long: Ornithine carbamoyltransferase (306 aa).

Residues 46 to 49 (STRT), glutamine 73, arginine 97, and 124 to 127 (HPTQ) contribute to the carbamoyl phosphate site. L-ornithine is bound by residues asparagine 156, aspartate 220, and 224 to 225 (SM). Carbamoyl phosphate contacts are provided by residues 260–261 (CL) and arginine 288.

It belongs to the aspartate/ornithine carbamoyltransferase superfamily. OTCase family.

It localises to the cytoplasm. It carries out the reaction carbamoyl phosphate + L-ornithine = L-citrulline + phosphate + H(+). It functions in the pathway amino-acid degradation; L-arginine degradation via ADI pathway; carbamoyl phosphate from L-arginine: step 2/2. Functionally, reversibly catalyzes the transfer of the carbamoyl group from carbamoyl phosphate (CP) to the N(epsilon) atom of ornithine (ORN) to produce L-citrulline. This chain is Ornithine carbamoyltransferase, found in Campylobacter jejuni subsp. doylei (strain ATCC BAA-1458 / RM4099 / 269.97).